A 492-amino-acid chain; its full sequence is Ketol-acid reductoisomerase (NADP(+)) (492 aa).

The KARI N-terminal Rossmann domain maps to 15-208 (AQLGKCRFMA…GGHRAGVLES (194 aa)). NADP(+) contacts are provided by residues 45-48 (CGAQ), arginine 68, arginine 76, serine 78, and 108-110 (DKQ). Residue histidine 132 is part of the active site. An NADP(+)-binding site is contributed by glycine 158. KARI C-terminal knotted domains follow at residues 209–344 (SFVA…NAPQ) and 345–485 (FEGK…MTDM). Aspartate 217, glutamate 221, glutamate 389, and glutamate 393 together coordinate Mg(2+). Serine 414 contacts substrate.

Belongs to the ketol-acid reductoisomerase family. Requires Mg(2+) as cofactor.

The catalysed reaction is (2R)-2,3-dihydroxy-3-methylbutanoate + NADP(+) = (2S)-2-acetolactate + NADPH + H(+). It catalyses the reaction (2R,3R)-2,3-dihydroxy-3-methylpentanoate + NADP(+) = (S)-2-ethyl-2-hydroxy-3-oxobutanoate + NADPH + H(+). Its pathway is amino-acid biosynthesis; L-isoleucine biosynthesis; L-isoleucine from 2-oxobutanoate: step 2/4. It functions in the pathway amino-acid biosynthesis; L-valine biosynthesis; L-valine from pyruvate: step 2/4. Its function is as follows. Involved in the biosynthesis of branched-chain amino acids (BCAA). Catalyzes an alkyl-migration followed by a ketol-acid reduction of (S)-2-acetolactate (S2AL) to yield (R)-2,3-dihydroxy-isovalerate. In the isomerase reaction, S2AL is rearranged via a Mg-dependent methyl migration to produce 3-hydroxy-3-methyl-2-ketobutyrate (HMKB). In the reductase reaction, this 2-ketoacid undergoes a metal-dependent reduction by NADPH to yield (R)-2,3-dihydroxy-isovalerate. The chain is Ketol-acid reductoisomerase (NADP(+)) from Yersinia pseudotuberculosis serotype O:3 (strain YPIII).